Consider the following 220-residue polypeptide: Protein CREG1 (220 aa).

The N-terminal stretch at 1 to 31 (MAARAPELARSLLAALLAPALVALLVSPASG) is a signal peptide. The segment at 30–53 (SGRGGRDHGDWDVDRRLPPLPPRE) is disordered. Positions 33-53 (GGRDHGDWDVDRRLPPLPPRE) are enriched in basic and acidic residues. N-linked (GlcNAc...) asparagine glycans are attached at residues N160 and N216.

Belongs to the CREG family. Homodimer. Interacts with IGF2R; the interaction is dependent on glycosylation. N-glycosylated. As to expression, widely expressed.

It is found in the secreted. In terms of biological role, may contribute to the transcriptional control of cell growth and differentiation. Antagonizes transcriptional activation and cellular transformation by the adenovirus E1A protein. The transcriptional control activity of cell growth requires interaction with IGF2R. This chain is Protein CREG1 (Creg1), found in Mus musculus (Mouse).